We begin with the raw amino-acid sequence, 725 residues long: MDSRTKGKTVMEVGGDGVAVITLINPPVNSLSFDVLYNLKSNYEEALSRNDVKAIVITGAKGRFSGGFDISGFGEMQKGNVKEPKAGYISIDIITDLLEAARKPSVAAIDGLALGGGLELAMACHARISAPAAQLGLPELQLGVIPGFGGTQRLPRLVGLTKALEMILTSKPVKAEEGHSLGLIDAVVPPAELVTTARRWALDIVGRRKPWVSSVSKTDKLPPLGEAREILTFAKAQTLKRAPNMKHPLMCLDAIEVGIVSGPRAGLEKEAEVASQVVKLDTTKGLIHVFFSQRGTAKVPGVTDRGLVPRKIKKVAIIGGGLMGSGIATALILSNYPVILKEVNEKFLEAGIGRVKANLQSRVRKGSMSQEKFEKTMSLLKGSLDYESFRDVDMVIEAVIENISLKQQIFADLEKYCPQHCILASNTSTIDLNKIGERTKSQDRIVGAHFFSPAHIMPLLEIVRTNHTSAQVIVDLLDVGKKIKKTPVVVGNCTGFAVNRMFFPYTQAAMFLVECGADPYLIDRAISKFGMPMGPFRLCDLVGFGVAIATATQFIENFSERTYKSMIIPLMQEDKRAGEATRKGFYLYDDKRKAKPDPELKKYIEKARSISGVKLDPKLANLSEKDIIEMTFFPVVNEACRVFAEGIAVKAADLDIAGIMGMGFPPYRGGIMFWADSIGSKYIYSRLDEWSKAYGEFFKPCAFLAERGSKGVLLSAPVKQASSRL.

The Nucleophile role is filled by E119. E139 acts as the Proton acceptor in catalysis. The Microbody targeting signal motif lies at 723-725; sequence SRL.

The protein in the N-terminal section; belongs to the enoyl-CoA hydratase/isomerase family. This sequence in the central section; belongs to the 3-hydroxyacyl-CoA dehydrogenase family. In terms of tissue distribution, highly expressed in senescing leaves and at lower levels in flowers and siliques.

The protein resides in the glyoxysome. It localises to the peroxisome. The enzyme catalyses a (3S)-3-hydroxyacyl-CoA = a (2E)-enoyl-CoA + H2O. It carries out the reaction a 4-saturated-(3S)-3-hydroxyacyl-CoA = a (3E)-enoyl-CoA + H2O. It catalyses the reaction (3S)-3-hydroxybutanoyl-CoA = (2E)-butenoyl-CoA + H2O. The catalysed reaction is (3S)-hydroxyoctanoyl-CoA = (2E)-octenoyl-CoA + H2O. The enzyme catalyses (3S)-3-hydroxydodecanoyl-CoA = (2E)-dodecenoyl-CoA + H2O. It carries out the reaction (3S)-hydroxytetradecanoyl-CoA = (2E)-tetradecenoyl-CoA + H2O. It catalyses the reaction (3S)-hydroxyhexanoyl-CoA = (2E)-hexenoyl-CoA + H2O. The catalysed reaction is a (3Z)-enoyl-CoA = a 4-saturated (2E)-enoyl-CoA. The enzyme catalyses a (3E)-enoyl-CoA = a 4-saturated (2E)-enoyl-CoA. It carries out the reaction (3S)-3-hydroxybutanoyl-CoA = (3R)-3-hydroxybutanoyl-CoA. It catalyses the reaction a (3S)-3-hydroxyacyl-CoA + NAD(+) = a 3-oxoacyl-CoA + NADH + H(+). The catalysed reaction is (3S)-3-hydroxybutanoyl-CoA + NAD(+) = acetoacetyl-CoA + NADH + H(+). The enzyme catalyses (3S)-hydroxyhexanoyl-CoA + NAD(+) = 3-oxohexanoyl-CoA + NADH + H(+). It carries out the reaction (3S)-hydroxyoctanoyl-CoA + NAD(+) = 3-oxooctanoyl-CoA + NADH + H(+). It catalyses the reaction (3S)-3-hydroxydodecanoyl-CoA + NAD(+) = 3-oxododecanoyl-CoA + NADH + H(+). The catalysed reaction is (3S)-hydroxytetradecanoyl-CoA + NAD(+) = 3-oxotetradecanoyl-CoA + NADH + H(+). It participates in lipid metabolism; fatty acid beta-oxidation. Involved in peroxisomal fatty acid beta-oxidation during seed germination. Possesses enoyl-CoA hydratase activity against long chain substrates (C14-C18) and 3-hydroxyacyl-CoA dehydrogenase activity against chains of variable sizes (C6-C18). Possesses 3-hydroxy-3-phenylpropionyl-CoA dehydrogenase activity and is involved in the peroxisomal beta-oxidation pathway for the biosynthesis of benzoic acid (BA). Required for the accumulation in seeds of substituted hydroxybenzoylated choline esters, which are BA-containing secondary metabolites. Fatty acid beta-oxidation pathway in peroxisomes regulates gene silencing, histone acetylation and DNA methylation. The protein is Peroxisomal fatty acid beta-oxidation multifunctional protein MFP2 of Arabidopsis thaliana (Mouse-ear cress).